The sequence spans 94 residues: Protein translocase subunit SecE (94 aa).

A disordered region spans residues 1-32; the sequence is MTDAVGSIDMPDAQDEAPDSKKSRKGGKRGKK. Positions 22–32 are enriched in basic residues; sequence KSRKGGKRGKK. Residues 65-85 form a helical membrane-spanning segment; that stretch reads TVVIIFVVIMIGLVTLIDYGF.

This sequence belongs to the SecE/SEC61-gamma family. Component of the Sec protein translocase complex. Heterotrimer consisting of SecY, SecE and SecG subunits. The heterotrimers can form oligomers, although 1 heterotrimer is thought to be able to translocate proteins. Interacts with the ribosome. Interacts with SecDF, and other proteins may be involved. Interacts with SecA.

It is found in the cell membrane. Its function is as follows. Essential subunit of the Sec protein translocation channel SecYEG. Clamps together the 2 halves of SecY. May contact the channel plug during translocation. The chain is Protein translocase subunit SecE from Streptomyces coelicolor (strain ATCC BAA-471 / A3(2) / M145).